The chain runs to 211 residues: Protein-methionine-sulfoxide reductase heme-binding subunit MsrQ (211 aa).

5 consecutive transmembrane segments (helical) span residues 17 to 37, 54 to 74, 82 to 102, 116 to 136, and 153 to 173; these read LAGL…GLGA, FLLA…PLLI, LWCF…ELGV, PYLT…FTST, and FVYL…KIIS.

It belongs to the MsrQ family. As to quaternary structure, heterodimer of a catalytic subunit (MsrP) and a heme-binding subunit (MsrQ). FMN is required as a cofactor. Requires heme b as cofactor.

It localises to the cell inner membrane. Its function is as follows. Part of the MsrPQ system that repairs oxidized periplasmic proteins containing methionine sulfoxide residues (Met-O), using respiratory chain electrons. Thus protects these proteins from oxidative-stress damage caused by reactive species of oxygen and chlorine generated by the host defense mechanisms. MsrPQ is essential for the maintenance of envelope integrity under bleach stress, rescuing a wide series of structurally unrelated periplasmic proteins from methionine oxidation, including the primary periplasmic chaperone SurA and the lipoprotein Pal. MsrQ provides electrons for reduction to the reductase catalytic subunit MsrP, using the quinone pool of the respiratory chain. The sequence is that of Protein-methionine-sulfoxide reductase heme-binding subunit MsrQ from Escherichia coli (strain SMS-3-5 / SECEC).